Consider the following 441-residue polypeptide: Lysine histidine transporter 2 (441 aa).

The Cytoplasmic segment spans residues 1–32 (MGNSEMSASEVAAAKQKNVDDWLPITSSRNAK). The helical transmembrane segment at 33-53 (WWYSAFHNVTAMVGAGVLSLP) threads the bilayer. Residues 54–58 (YAMSN) are Extracellular-facing. A helical transmembrane segment spans residues 59–79 (LGWGPGVTIMVMSWIITLYTL). At 80-110 (WQMVEMHEIVPGKRLDRYHELGQHAFGEKLG) the chain is on the cytoplasmic side. Residues 111–131 (LWIVVPQQLIVEVGVDIVYMV) form a helical membrane-spanning segment. Topologically, residues 132–152 (TGGASLKKVHQLVCPDCKEIR) are extracellular. A helical transmembrane segment spans residues 153 to 173 (TTFWIMIFASVHFVISHLPNF). Topologically, residues 174 to 175 (NS) are cytoplasmic. Residues 176–196 (ISIISLAAAVMSLTYSTIAWA) traverse the membrane as a helical segment. The Extracellular segment spans residues 197–222 (ASVHKGVHPDVDYSPRASTDVGKVFN). Residues 223-243 (FLNALGDVAFAYAGHNVVLEI) form a helical membrane-spanning segment. Residues 244–263 (QATIPSTPEMPSKVPMWRGV) are Cytoplasmic-facing. A helical transmembrane segment spans residues 264-284 (IVAYIVVAICYFPVAFLGYYI). Residues 285–300 (FGNSVDDNILITLEKP) are Extracellular-facing. A helical membrane pass occupies residues 301 to 321 (IWLIAMANMFVVIHVIGSYQI). Residues 322-347 (FAMPVFDMLETVLVKKMNFNPSFKLR) lie on the Cytoplasmic side of the membrane. Residues 348–370 (FITRSLYVAFTMIVAICVPFFGG) form a helical membrane-spanning segment. Residues 371–373 (LLG) are Extracellular-facing. Residues 374 to 396 (FFGGFAFAPTTYYLPCIMWLVLK) traverse the membrane as a helical segment. Topologically, residues 397 to 406 (KPKRFGLSWT) are cytoplasmic. Residues 407–427 (ANWFCIIVGVLLTILAPIGGL) traverse the membrane as a helical segment. The Extracellular portion of the chain corresponds to 428–441 (RTIIINAKTYKFFS).

Belongs to the amino acid/polyamine transporter 2 family. Amino acid/auxin permease (AAAP) (TC 2.A.18.2) subfamily. As to expression, expressed in flower buds and to lower levels in leaves and stems. Not detected in roots and siliques. Restricted to the tapetum cell layer.

The protein resides in the cell membrane. With respect to regulation, inhibited by diethylstibestrol (DES), 2,4-dinitrophenol (DNP) and carbonlycyanide m-chlorophenylhydrazone (CCCP). In terms of biological role, amino acid-proton symporter. Transporter with a broad specificity for neutral and acidic amino acids. Basic amino acids are only marginally transported. Involved in import of amino acids into the tapetum cells for synthesis of compounds important for microspore structure. In Arabidopsis thaliana (Mouse-ear cress), this protein is Lysine histidine transporter 2 (LHT2).